A 497-amino-acid polypeptide reads, in one-letter code: IWS1-like protein (497 aa).

The segment at 1 to 191 (MSDHEGASPA…SDRRGGRNFE (191 aa)) is disordered. Low complexity-rich tracts occupy residues 7 to 23 (ASPA…PVSP) and 47 to 57 (PLAPRSPASPR). Composition is skewed to basic and acidic residues over residues 123–134 (EGDKQQKRKDLF), 144–160 (DRPK…VKGD), and 181–191 (PSDRRGGRNFE). A TFIIS N-terminal domain is found at 281–361 (SALSEWLAPL…GEWARPIYHL (81 aa)). A disordered region spans residues 369-433 (SRQEREERDY…GDKGYINRAR (65 aa)). Composition is skewed to basic and acidic residues over residues 370–382 (RQER…SRMP) and 401–411 (APKRPRIRDAE).

It belongs to the IWS1 family.

The protein localises to the nucleus. The chain is IWS1-like protein from Caenorhabditis briggsae.